The sequence spans 507 residues: Zinc finger CCCH-type with G patch domain-containing protein (507 aa).

Met1 is subject to N-acetylmethionine. The tract at residues 88–125 (PVDPGNDSKTVPGSEVQPTPTSSALEEEEEDPDLEDLS) is disordered. The segment covering 94–111 (DSKTVPGSEVQPTPTSSA) has biased composition (polar residues). Positions 112 to 123 (LEEEEEDPDLED) are enriched in acidic residues. The C3H1-type zinc-finger motif lies at 170–196 (KSLKPCPFFLEGKCRFKENCRFSHGQL). Positions 264–283 (LRTEATDSSDSDTGDASDSS) are disordered. Ser272 bears the Phosphoserine mark. Thr276 bears the Phosphothreonine mark. Residues 309–355 (TRGIGSKLLVKMGYEFGKGLGRHAEGRVEPIHAVVLPRGKSLDQCAE) enclose the G-patch domain. Position 349 is a phosphoserine (Ser349). Disordered regions lie at residues 359–389 (KKTK…PPRN) and 486–507 (AQEA…MTEF). Residues 487–507 (QEADLQRKQRKADTHRKMTEF) show a composition bias toward basic and acidic residues.

Interacts with CHD4/Mi-2; the interaction is direct.

The protein localises to the nucleus. Transcription repressor that specifically binds the 5'-GGAG[GA]A[GA]A-3' consensus sequence. Represses transcription by recruiting the chromatin multiprotein complex NuRD to target promoters. Negatively regulates expression of EGFR, a gene involved in cell proliferation, survival and migration. Its ability to repress genes of the EGFR pathway suggest it may act as a tumor suppressor. The chain is Zinc finger CCCH-type with G patch domain-containing protein (Zgpat) from Rattus norvegicus (Rat).